The primary structure comprises 266 residues: N-acetyltransferase ECO1 (266 aa).

The segment at 31-55 (KKCTECQMSYIIDSPADCAEHKKYH) adopts a CCHH-type zinc-finger fold. An N-acetyltransferase domain is found at 108–266 (TPGKTAEVKA…SGELLIPCYI (159 aa)).

This sequence belongs to the acetyltransferase family. ECO subfamily.

The protein resides in the nucleus. Its function is as follows. Probable acetyltransferase required for the establishment of sister chromatid cohesion and couple the processes of cohesion and DNA replication to ensure that only sister chromatids become paired together. In contrast to the structural cohesins, the deposition and establishment factors are required only during S phase. Acts by acetylating the cohesin complex component SMC3. The protein is N-acetyltransferase ECO1 (ECO1) of Eremothecium gossypii (strain ATCC 10895 / CBS 109.51 / FGSC 9923 / NRRL Y-1056) (Yeast).